The following is a 419-amino-acid chain: ADIPOR-like receptor IZH3 (419 aa).

Residues 1–65 (MSHPNTHMPR…GEAGGGRSVL (65 aa)) are disordered. The Lumenal portion of the chain corresponds to 1 to 147 (MSHPNTHMPR…LNAYGWHNET (147 aa)). A glycan (N-linked (GlcNAc...) asparagine) is linked at Asn-145. The chain crosses the membrane as a helical span at residues 148-168 (INIWSHLVGAAVLAYLLCWGW). At 169 to 184 (PRSDVYRAAQVPRLAK) the chain is on the cytoplasmic side. A helical transmembrane segment spans residues 185–205 (WAIGAFLACGVKCMASSVAWH). Over 206 to 225 (TFNGTCHLKLRSRFVCVDYT) the chain is Lumenal. Asn-208 carries N-linked (GlcNAc...) asparagine glycosylation. The helical transmembrane segment at 226 to 246 (GITLLVTASVVTTVAVTLYGL) threads the bilayer. At 247-249 (SRP) the chain is on the cytoplasmic side. A helical transmembrane segment spans residues 250 to 270 (LMYAYMVASIGLGTAAGVMNW). Topologically, residues 271–283 (SPHFDRPEARPLR) are lumenal. A helical membrane pass occupies residues 284-304 (IAVYVGLAALGLVSFVHVWMQ). The Cytoplasmic portion of the chain corresponds to 305–311 (VRWASAH). A helical transmembrane segment spans residues 312-332 (LMAPLVYKSLVWYGIGVVFYA). Over 333 to 377 (TLVPERWRSDVTLDCCSGPVHEAACRQFRDLPPVARKDRQFWSLW) the chain is Lumenal. The helical transmembrane segment at 378–398 (WVDYFCHSHFLWHVFVVLGVV) threads the bilayer. Residues 399-419 (GHYRAVLQMSRIVWLDAGRAF) lie on the Cytoplasmic side of the membrane.

It belongs to the ADIPOR family.

The protein localises to the endoplasmic reticulum membrane. In terms of biological role, ADIPOR-like receptor involved in zinc metabolism either by altering membrane sterol content or by directly altering cellular zinc levels. The sequence is that of ADIPOR-like receptor IZH3 (IZH3) from Eremothecium gossypii (strain ATCC 10895 / CBS 109.51 / FGSC 9923 / NRRL Y-1056) (Yeast).